A 471-amino-acid chain; its full sequence is Retinoic acid receptor RXR-beta-A (471 aa).

The tract at residues 1-34 is disordered; it reads MGDSRDSRSPDSSSVSSPPSGQRSPPLAPSAAAM. Residues 1 to 102 are modulating; it reads MGDSRDSRSP…HAVSSSDDVK (102 aa). Residues 10 to 25 are compositionally biased toward low complexity; it reads PDSSSVSSPPSGQRSP. The nuclear receptor DNA-binding region spans 122 to 197; the sequence is KRLCAICGDR…MGMKREVVQD (76 aa). 2 consecutive NR C4-type zinc fingers follow at residues 125–145 and 161–185; these read CAICGDRSSGKHYGVYSCEGC and CRDNKDCLVDKRQRNRCQYCRYQKC. The segment covering 196-216 has biased composition (basic and acidic residues); it reads QDERQRSVQEERQRNKERDGE. Residues 196–226 are disordered; the sequence is QDERQRSVQEERQRNKERDGEVESSSAANEE. The hinge stretch occupies residues 198–221; sequence ERQRSVQEERQRNKERDGEVESSS. One can recognise an NR LBD domain in the interval 224 to 467; the sequence is NEEMPVEKIL…TFLMEMLEAP (244 aa).

The protein belongs to the nuclear hormone receptor family. NR2 subfamily. As to quaternary structure, homodimer. Heterodimer; with a rar molecule. Binds DNA preferentially as a rar/rxr heterodimer. Heterodimerizes with rarga. As to expression, shows uniform expression from the blastula to mid-gastrula stages. At 12 hours post-fertilization (hpf), expressed ubiquitously but more weakly. At 24 hpf, restricted to the ventral diencephalon, pharangeal endoderm and trunk and tail mesoderm; mesoderm expression is in medial cells of each somite along the dorsoventral axis, forming stripes. At 48 hpf, expressed in forebrain, eye, midbrain and anterior hindbrain.

Its subcellular location is the nucleus. In terms of biological role, receptor for retinoic acid. Retinoic acid receptors bind as heterodimers to their target response elements in response to their ligands, all-trans or 9-cis retinoic acid, and regulate gene expression in various biological processes. The rar/rxr heterodimers bind to the retinoic acid response elements (RARE) composed of tandem 5'-AGGTCA-3' sites known as DR1-DR5. The high affinity ligand for rxrs is 9-cis retinoic acid. The polypeptide is Retinoic acid receptor RXR-beta-A (rxrba) (Danio rerio (Zebrafish)).